Reading from the N-terminus, the 149-residue chain is 3-dehydroquinate dehydratase 2 (149 aa).

Tyr-24 acts as the Proton acceptor in catalysis. The substrate site is built by Asn-75, His-81, and Asp-88. The active-site Proton donor is the His-101. Residues 102-103 (LS) and Arg-112 each bind substrate.

This sequence belongs to the type-II 3-dehydroquinase family. In terms of assembly, homododecamer.

The catalysed reaction is 3-dehydroquinate = 3-dehydroshikimate + H2O. The protein operates within metabolic intermediate biosynthesis; chorismate biosynthesis; chorismate from D-erythrose 4-phosphate and phosphoenolpyruvate: step 3/7. Functionally, catalyzes a trans-dehydration via an enolate intermediate. The protein is 3-dehydroquinate dehydratase 2 (aroQ2) of Pseudomonas putida (strain ATCC 47054 / DSM 6125 / CFBP 8728 / NCIMB 11950 / KT2440).